The sequence spans 62 residues: Large ribosomal subunit protein uL29 (62 aa).

This sequence belongs to the universal ribosomal protein uL29 family.

The chain is Large ribosomal subunit protein uL29 from Acholeplasma laidlawii (strain PG-8A).